Consider the following 200-residue polypeptide: Proteasome subunit beta 2 (200 aa).

A propeptide spans 1–7 (MEEKKTG) (removed in mature form; by autocatalysis). The active-site Nucleophile is threonine 8.

This sequence belongs to the peptidase T1B family. The 20S proteasome core is composed of 14 alpha and 14 beta subunits that assemble into four stacked heptameric rings, resulting in a barrel-shaped structure. The two inner rings, each composed of seven catalytic beta subunits, are sandwiched by two outer rings, each composed of seven alpha subunits. The catalytic chamber with the active sites is on the inside of the barrel. Has a gated structure, the ends of the cylinder being occluded by the N-termini of the alpha-subunits. Is capped at one or both ends by the proteasome regulatory ATPase, PAN.

The protein localises to the cytoplasm. The enzyme catalyses Cleavage of peptide bonds with very broad specificity.. The formation of the proteasomal ATPase PAN-20S proteasome complex, via the docking of the C-termini of PAN into the intersubunit pockets in the alpha-rings, triggers opening of the gate for substrate entry. Interconversion between the open-gate and close-gate conformations leads to a dynamic regulation of the 20S proteasome proteolysis activity. In terms of biological role, component of the proteasome core, a large protease complex with broad specificity involved in protein degradation. This is Proteasome subunit beta 2 from Thermococcus gammatolerans (strain DSM 15229 / JCM 11827 / EJ3).